Consider the following 187-residue polypeptide: Shikimate kinase (187 aa).

T14–T19 is a binding site for ATP. Residue S18 coordinates Mg(2+). Positions 36, 60, and 82 each coordinate substrate. Residue R120 participates in ATP binding. R147 serves as a coordination point for substrate.

It belongs to the shikimate kinase family. As to quaternary structure, monomer. Mg(2+) is required as a cofactor.

Its subcellular location is the cytoplasm. It carries out the reaction shikimate + ATP = 3-phosphoshikimate + ADP + H(+). Its pathway is metabolic intermediate biosynthesis; chorismate biosynthesis; chorismate from D-erythrose 4-phosphate and phosphoenolpyruvate: step 5/7. Catalyzes the specific phosphorylation of the 3-hydroxyl group of shikimic acid using ATP as a cosubstrate. The chain is Shikimate kinase from Chloroherpeton thalassium (strain ATCC 35110 / GB-78).